Reading from the N-terminus, the 634-residue chain is Chaperone protein HtpG (634 aa).

The segment at 1-342 (MSVETQKETL…SNDLSLNVSR (342 aa)) is a; substrate-binding. The segment at 343-559 (EILQKDPVID…EQDLGLQMRQ (217 aa)) is b. The interval 560 to 634 (ILEASGQKVP…LNKLLVELSA (75 aa)) is c.

The protein belongs to the heat shock protein 90 family. Homodimer.

It is found in the cytoplasm. Molecular chaperone. Has ATPase activity. In Ectopseudomonas mendocina (strain ymp) (Pseudomonas mendocina), this protein is Chaperone protein HtpG.